A 577-amino-acid chain; its full sequence is Arginine--tRNA ligase (577 aa).

Positions 122–132 (PNVAKEMHVGH) match the 'HIGH' region motif.

This sequence belongs to the class-I aminoacyl-tRNA synthetase family. Monomer.

It localises to the cytoplasm. It catalyses the reaction tRNA(Arg) + L-arginine + ATP = L-arginyl-tRNA(Arg) + AMP + diphosphate. This Vibrio vulnificus (strain CMCP6) protein is Arginine--tRNA ligase.